Here is a 275-residue protein sequence, read N- to C-terminus: Small ribosomal subunit protein uS3 (275 aa).

A KH type-2 domain is found at 38 to 106 (IRKLLATGLE…QVQLNILEVK (69 aa)). Positions 215 to 275 (AAAAPASDRP…AEAPAESTES (61 aa)) are disordered. Residues 237-275 (SGSAGTTATSTEAGRAATSDAPAAGTAAAAEAPAESTES) are compositionally biased toward low complexity.

Belongs to the universal ribosomal protein uS3 family. Part of the 30S ribosomal subunit. Forms a tight complex with proteins S10 and S14.

Its function is as follows. Binds the lower part of the 30S subunit head. Binds mRNA in the 70S ribosome, positioning it for translation. The protein is Small ribosomal subunit protein uS3 of Mycolicibacterium smegmatis (strain ATCC 700084 / mc(2)155) (Mycobacterium smegmatis).